The following is a 151-amino-acid chain: Potassium/proton antiporter CemA (151 aa).

2 helical membrane-spanning segments follow: residues 7-27 and 107-127; these read LPSL…SSSF and ILHF…FFLG.

The protein belongs to the CemA family.

It localises to the plastid. Its subcellular location is the chloroplast inner membrane. The catalysed reaction is K(+)(in) + H(+)(out) = K(+)(out) + H(+)(in). Its function is as follows. Contributes to K(+)/H(+) antiport activity by supporting proton efflux to control proton extrusion and homeostasis in chloroplasts in a light-dependent manner to modulate photosynthesis. Prevents excessive induction of non-photochemical quenching (NPQ) under continuous-light conditions. Indirectly promotes efficient inorganic carbon uptake into chloroplasts. This chain is Potassium/proton antiporter CemA, found in Aegilops crassa (Persian goatgrass).